Here is a 470-residue protein sequence, read N- to C-terminus: MKPLLRSHETQYYSLYPDTLNGLHNVFRTIGNSVQSDTVRRLNLGYLDGDNRRGNLAGGLELLRDATTPNASRMNITRPLDTSTSGATAMIMQSLRTDVAENITLLTGDSRATISRQVTLTDFCFPDAEMPGLIILSIRHPLDINSEALYATPAGRDPRVMETVWYELSELAAVSVNRVNGSGVRPSLVSLSFLIAARASDYADKCGAEALRAHVISNYGRRRMEEKLDRFGICLITMLRCRVFPHRHFQLLGGLISWISQREIASITAVVRGPQESIKTEQTAMPRSSVYVPACAYIDFDKDIRVIHEERSSSSLYLVFVYTQKFGRETVRIYVMRSRLGEWAFREGLGYMYSGVRSNNAITGVDGLIVPHGANVNMEFPLTKTLDLRNRDRRLGIAARSRDLNKADWKVDLRGRPTKESCMYAAYCRLGHLDESSVPVKKFERCGSLDIPVIWIPGVIWNIGTWIECY.

The protein belongs to the herpesviridae TRX1 protein family. As to quaternary structure, interacts with TRX2, MCP and capsid vertex component 2/CVC2.

Its subcellular location is the virion. The protein resides in the host nucleus. In terms of biological role, structural component of the T=16 icosahedral capsid. The capsid is composed of pentamers and hexamers of major capsid protein/MCP, which are linked together by heterotrimers called triplexes. These triplexes are formed by a single molecule of triplex protein 1/TRX1 and two copies of triplex protein 2/TRX2. Additionally, TRX1 is required for efficient transport of TRX2 to the nucleus, which is the site of capsid assembly. The protein is Triplex capsid protein 1 of Gallid herpesvirus 2 (strain Chicken/Md5/ATCC VR-987) (GaHV-2).